A 766-amino-acid polypeptide reads, in one-letter code: MSIMLSISRRQNSYILLNHSRFLRRFSYDVDPRPEIKSESQEFVVVKFVKTLQNTPQHDWASSESLSALVVSSSSASPLVFSQITRRLGSYSLAISFFEYLDAKSQSLKRREESLSLALQSVIEFAGSEPDPRDKLLRLYEIAKEKNIPLTIVATKLLIRWFGRMGMVNQSVLVYERLDSNMKNSQVRNVVVDVLLRNGLVDDAFKVLDEMLQKESVFPPNRITADIVLHEVWKERLLTEEKIIALISRFSSHGVSPNSVWLTRFISSLCKNARANTAWDILSDLMKNKTPLEAPPFNALLSCLGRNMDISRMNDLVLKMDEVKIRPDVVTLGILINTLCKSRRVDEALEVFEQMRGKRTDDGNVIKADSIHFNTLIDGLCKVGRLKEAEELLVRMKLEERCVPNAVTYNCLIDGYCRAGKLETAKEVVSRMKEDEIKPNVVTVNTIVGGMCRHHGLNMAVVFFMDMEKEGVKGNVVTYMTLIHACCSVSNVEKAMYWYEKMLEAGCSPDAKIYYALISGLCQVRRDHDAIRVVEKLKEGGFSLDLLAYNMLIGLFCDKNNAEKVYEMLTDMEKEGKKPDSITYNTLISFFGKHKDFESVERMMEQMREDGLDPTVTTYGAVIDAYCSVGELDEALKLFKDMGLHSKVNPNTVIYNILINAFSKLGNFGQALSLKEEMKMKMVRPNVETYNALFKCLNEKTQGETLLKLMDEMVEQSCEPNQITMEILMERLSGSDELVKLRKFMQGYSVASPTEKASPFDVFSLG.

PPR repeat units lie at residues threonine 151–asparagine 181, asparagine 184–phenylalanine 218, asparagine 221–proline 257, asparagine 258–leucine 292, glutamate 293–proline 327, aspartate 328–lysine 358, aspartate 369–proline 404, asparagine 405–proline 439, asparagine 440–glycine 474, asparagine 475–proline 509, aspartate 510–leucine 544, aspartate 545–proline 579, aspartate 580–proline 614, threonine 615–proline 650, asparagine 651–proline 685, and asparagine 686–proline 720.

This sequence belongs to the PPR family. P subfamily.

The polypeptide is Pentatricopeptide repeat-containing protein At5g28460 (Arabidopsis thaliana (Mouse-ear cress)).